Reading from the N-terminus, the 264-residue chain is Anamorsin homolog 2 (264 aa).

The interval 1–142 (MAATAAALAV…KVSWSMGSSF (142 aa)) is N-terminal SAM-like domain. A linker region spans residues 143 to 174 (PLKKATKGLPKIQIDDDSELIDEDSLLTEDDL). Cys185, Cys194, Cys197, and Cys199 together coordinate [2Fe-2S] cluster. Positions 185–199 (CEVGATRKACKNCTC) are fe-S binding site A. The [4Fe-4S] cluster site is built by Cys225, Cys228, Cys236, and Cys239. 2 consecutive short sequence motifs (cx2C motif) follow at residues 225–228 (CGNC) and 236–239 (CGTC). Positions 225-239 (CGNCGLGDAFRCGTC) are fe-S binding site B.

The protein belongs to the anamorsin family. Monomer. [2Fe-2S] cluster serves as cofactor. [4Fe-4S] cluster is required as a cofactor.

It is found in the cytoplasm. The protein resides in the mitochondrion intermembrane space. Its function is as follows. Component of the cytosolic iron-sulfur (Fe-S) protein assembly (CIA) machinery. Required for the maturation of extramitochondrial Fe-S proteins. Part of an electron transfer chain functioning in an early step of cytosolic Fe-S biogenesis, facilitating the de novo assembly of a [4Fe-4S] cluster on the cytosolic Fe-S scaffold complex. Electrons are transferred from NADPH via a FAD- and FMN-containing diflavin oxidoreductase. Together with the diflavin oxidoreductase, also required for the assembly of the diferric tyrosyl radical cofactor of ribonucleotide reductase (RNR), probably by providing electrons for reduction during radical cofactor maturation in the catalytic small subunit. This Oryza sativa subsp. indica (Rice) protein is Anamorsin homolog 2.